The following is a 695-amino-acid chain: MNHDPAETRDTAAAPLADTESPSPVSPELTPHPAPAAQDIDTATAELTVDEDDEARLPEIEDDSAEVADGPLAVGRAAIEQAVRLAPTSPGVYRMLNAAHDVLYVGKAKNVKKRLSSYARPTGHVMRIARMIAATVTVEIISTSTETEALLLEANLIKQLRPRFNVLLRDDKSFPYILITGDHWAPQILKHRGAQSRPGRYFGPFASVGAVNRTITALQRAFLVRSCTDSFFESRTRPCLLYQIRRCSGPCTGEVDFPGYTELVREAKDFLSGRSRAVKQELAVEMEKASNELEFETAALYRDRLAALSAIQSQQGINPRTVEEADVFAIYQEGGYSCVEVFFFRTGQNWGNRAYFPRAEKSFTPEEVLASFLAQFYDDKPPPKLILLSHDIEDCALLADALCIKADRKVEISTPKRGEKKELVAHALTNAREALGRKLADTATQTRLLQGLATTLGLPKPPQRIEVYDNSHIQGTNAVGAMIVAGPDGFIKNQYRKFNIRSEGLTPGDDYAMMREVLERRFKRLAAAKAEGEAAKPNDDETPQWPDLVIIDGGRGQLNAARGVLTELGLDAEVTLLGVAKGPDRDAGRETLFMPEREAIKLEPRDPVLYFIQRLRDEAHRFVIGSHRKLRKKDIREAGLQEIPGIGPSRKRALLHHFGTLKEIERASLGDLGKVPGISAESARRIFDFFHPGPG.

Over residues 1 to 10 the composition is skewed to basic and acidic residues; that stretch reads MNHDPAETRD. Positions 1-44 are disordered; the sequence is MNHDPAETRDTAAAPLADTESPSPVSPELTPHPAPAAQDIDTAT. The GIY-YIG domain maps to 88-166; sequence TSPGVYRMLN…IKQLRPRFNV (79 aa). A UVR domain is found at 276–311; sequence RAVKQELAVEMEKASNELEFETAALYRDRLAALSAI.

The protein belongs to the UvrC family. In terms of assembly, interacts with UvrB in an incision complex.

It is found in the cytoplasm. Its function is as follows. The UvrABC repair system catalyzes the recognition and processing of DNA lesions. UvrC both incises the 5' and 3' sides of the lesion. The N-terminal half is responsible for the 3' incision and the C-terminal half is responsible for the 5' incision. This Rhodopseudomonas palustris (strain HaA2) protein is UvrABC system protein C.